We begin with the raw amino-acid sequence, 407 residues long: Imidazolonepropionase (407 aa).

Positions 75 and 77 each coordinate Fe(3+). Positions 75 and 77 each coordinate Zn(2+). 4-imidazolone-5-propanoate contacts are provided by Arg84, Tyr142, and His169. Tyr142 contributes to the N-formimidoyl-L-glutamate binding site. A Fe(3+)-binding site is contributed by His232. His232 is a binding site for Zn(2+). Gln235 is a 4-imidazolone-5-propanoate binding site. Fe(3+) is bound at residue Asp306. Position 306 (Asp306) interacts with Zn(2+). N-formimidoyl-L-glutamate-binding residues include Asn308 and Gly310. A 4-imidazolone-5-propanoate-binding site is contributed by Thr311.

The protein belongs to the metallo-dependent hydrolases superfamily. HutI family. Requires Zn(2+) as cofactor. Fe(3+) is required as a cofactor.

The protein localises to the cytoplasm. It catalyses the reaction 4-imidazolone-5-propanoate + H2O = N-formimidoyl-L-glutamate. The protein operates within amino-acid degradation; L-histidine degradation into L-glutamate; N-formimidoyl-L-glutamate from L-histidine: step 3/3. In terms of biological role, catalyzes the hydrolytic cleavage of the carbon-nitrogen bond in imidazolone-5-propanoate to yield N-formimidoyl-L-glutamate. It is the third step in the universal histidine degradation pathway. In Rhodococcus jostii (strain RHA1), this protein is Imidazolonepropionase.